The following is a 262-amino-acid chain: Phosphomannomutase 1 (262 aa).

Alanine 2 carries the post-translational modification N-acetylalanine. Residue aspartate 19 is the Nucleophile of the active site. Residues aspartate 19 and aspartate 21 each coordinate Mg(2+). Aspartate 21 serves as the catalytic Proton donor/acceptor. Positions 28, 132, 143, 150, 186, 188, and 190 each coordinate alpha-D-mannose 1-phosphate. Asparagine 218, phenylalanine 230, aspartate 232, and threonine 235 together coordinate Mg(2+). Serine 242 is subject to Phosphoserine.

This sequence belongs to the eukaryotic PMM family. In terms of assembly, homodimer. Mg(2+) serves as cofactor. In terms of tissue distribution, strong expression in liver, heart, brain, and pancreas; lower expression in skeletal muscle.

It localises to the cytoplasm. It carries out the reaction alpha-D-mannose 1-phosphate = D-mannose 6-phosphate. It participates in nucleotide-sugar biosynthesis; GDP-alpha-D-mannose biosynthesis; alpha-D-mannose 1-phosphate from D-fructose 6-phosphate: step 2/2. With respect to regulation, IMP, a metabolite whose concentration is elevated in anoxia, inhibits phosphomannomutase and phosphoglucomutase activities and strongly enhances glucose-1,6-bisphosphatase activity. Involved in the synthesis of the GDP-mannose and dolichol-phosphate-mannose required for a number of critical mannosyl transfer reactions. In addition, may be responsible for the degradation of glucose-1,6-bisphosphate in ischemic brain. The protein is Phosphomannomutase 1 (PMM1) of Homo sapiens (Human).